Here is a 150-residue protein sequence, read N- to C-terminus: Large ribosomal subunit protein bL9 (150 aa).

This sequence belongs to the bacterial ribosomal protein bL9 family.

Functionally, binds to the 23S rRNA. The chain is Large ribosomal subunit protein bL9 from Streptococcus agalactiae serotype Ia (strain ATCC 27591 / A909 / CDC SS700).